We begin with the raw amino-acid sequence, 389 residues long: Cytochrome b (389 aa).

8 consecutive transmembrane segments (helical) span residues 32–52, 76–98, 113–133, 179–199, 225–245, 290–310, 325–345, and 353–373; these read FGFF…LLAM, WLLR…IHML, LWVS…LGYV, FFSL…LHII, FTIK…TFVF, LGVL…FLTI, LFWS…QPAA, and LYST…IYIV. Heme b is bound by residues His-82 and His-96. 2 residues coordinate heme b: His-183 and His-197.

The protein belongs to the cytochrome b family. The main subunits of complex b-c1 are: cytochrome b, cytochrome c1 and the Rieske protein. It depends on heme b as a cofactor.

It localises to the mitochondrion inner membrane. Its function is as follows. Component of the ubiquinol-cytochrome c reductase complex (complex III or cytochrome b-c1 complex) that is part of the mitochondrial respiratory chain. The b-c1 complex mediates electron transfer from ubiquinol to cytochrome c. Contributes to the generation of a proton gradient across the mitochondrial membrane that is then used for ATP synthesis. The polypeptide is Cytochrome b (cytB) (Dictyostelium discoideum (Social amoeba)).